The primary structure comprises 414 residues: 3-oxoacyl-[acyl-carrier-protein] synthase 2 (414 aa).

Positions 4-411 (NKRVVITGMG…GHNAVLVFKK (408 aa)) constitute a Ketosynthase family 3 (KS3) domain. Residues C165, H304, and H341 each act as for beta-ketoacyl synthase activity in the active site.

It belongs to the thiolase-like superfamily. Beta-ketoacyl-ACP synthases family.

It carries out the reaction a fatty acyl-[ACP] + malonyl-[ACP] + H(+) = a 3-oxoacyl-[ACP] + holo-[ACP] + CO2. The catalysed reaction is (9Z)-hexadecenoyl-[ACP] + malonyl-[ACP] + H(+) = 3-oxo-(11Z)-octadecenoyl-[ACP] + holo-[ACP] + CO2. The protein operates within lipid metabolism; fatty acid biosynthesis. Involved in the type II fatty acid elongation cycle. Catalyzes the elongation of a wide range of acyl-ACP by the addition of two carbons from malonyl-ACP to an acyl acceptor. Can efficiently catalyze the conversion of palmitoleoyl-ACP (cis-hexadec-9-enoyl-ACP) to cis-vaccenoyl-ACP (cis-octadec-11-enoyl-ACP), an essential step in the thermal regulation of fatty acid composition. This chain is 3-oxoacyl-[acyl-carrier-protein] synthase 2 (fabF), found in Staphylococcus aureus (strain MW2).